The sequence spans 79 residues: Small ribosomal subunit protein bS18 (79 aa).

Belongs to the bacterial ribosomal protein bS18 family. Part of the 30S ribosomal subunit. Forms a tight heterodimer with protein bS6.

Binds as a heterodimer with protein bS6 to the central domain of the 16S rRNA, where it helps stabilize the platform of the 30S subunit. This is Small ribosomal subunit protein bS18 from Streptococcus thermophilus (strain CNRZ 1066).